The following is a 556-amino-acid chain: GDP-Man:Man(3)GlcNAc(2)-PP-Dol alpha-1,2-mannosyltransferase (556 aa).

Topologically, residues 1–7 are lumenal; it reads MANGLFT. Residues 8-28 form a helical membrane-spanning segment; the sequence is YVAISLFTIGPLLALFIPFVW. Residues 29–184 lie on the Cytoplasmic side of the membrane; sequence RLVGSSLGWY…RWVLASTWPY (156 aa). Basic and acidic residues predominate over residues 64–79; that stretch reads SKSAKGRKAEKEDRDT. A disordered region spans residues 64–86; sequence SKSAKGRKAEKEDRDTFNNTEAT. Positions 185-205 form an intramembrane region, helical; it reads FTLAGQSFGSLIMAWDAFSLL. The Cytoplasmic portion of the chain corresponds to 206 to 454; the sequence is VPDIFVDTMG…VGVNGMWNEH (249 aa). Residues 455 to 475 constitute an intramembrane region (helical); that stretch reads FGIGVVEYQAAGLISVVHDSG. Residues 476-556 are Cytoplasmic-facing; sequence GPKLDIVVEV…KAVEKPKSRQ (81 aa).

It belongs to the glycosyltransferase group 1 family. Glycosyltransferase 4 subfamily.

The protein localises to the endoplasmic reticulum membrane. It catalyses the reaction an alpha-D-Man-(1-&gt;3)-[alpha-D-Man-(1-&gt;6)]-beta-D-Man-(1-&gt;4)-beta-D-GlcNAc-(1-&gt;4)-alpha-D-GlcNAc-diphospho-di-trans,poly-cis-dolichol + 2 GDP-alpha-D-mannose = an alpha-D-Man-(1-&gt;2)-alpha-D-Man-(1-&gt;2)-alpha-D-Man-(1-&gt;3)-[alpha-D-Man-(1-&gt;6)]-beta-D-Man-(1-&gt;4)-beta-D-GlcNAc-(1-&gt;4)-alpha-D-GlcNAc-diphospho-di-trans,poly-cis-dolichol + 2 GDP + 2 H(+). It participates in protein modification; protein glycosylation. Functionally, GDP-Man:Man(3)GlcNAc(2)-PP-Dol alpha-1,2-mannosyltransferase that operates in the biosynthetic pathway of dolichol-linked oligosaccharides, the glycan precursors employed in protein asparagine (N)-glycosylation. The assembly of dolichol-linked oligosaccharides begins on the cytosolic side of the endoplasmic reticulum membrane and finishes in its lumen. The sequential addition of sugars to dolichol pyrophosphate produces dolichol-linked oligosaccharides containing fourteen sugars, including two GlcNAcs, nine mannoses and three glucoses. Once assembled, the oligosaccharide is transferred from the lipid to nascent proteins by oligosaccharyltransferases. Catalyzes, on the cytoplasmic face of the endoplasmic reticulum, the addition of the fourth and fifth mannose residues to the dolichol-linked oligosaccharide chain, to produce Man(5)GlcNAc(2)-PP-dolichol core oligosaccharide. This Neurospora crassa (strain ATCC 24698 / 74-OR23-1A / CBS 708.71 / DSM 1257 / FGSC 987) protein is GDP-Man:Man(3)GlcNAc(2)-PP-Dol alpha-1,2-mannosyltransferase (alg-11).